Here is a 453-residue protein sequence, read N- to C-terminus: Tol-Pal system protein TolB (453 aa).

The signal sequence occupies residues 1 to 34 (MYLIIKKTHKLPHWLQKVSLSIMLIIFLWKPALL).

Belongs to the TolB family. In terms of assembly, the Tol-Pal system is composed of five core proteins: the inner membrane proteins TolA, TolQ and TolR, the periplasmic protein TolB and the outer membrane protein Pal. They form a network linking the inner and outer membranes and the peptidoglycan layer.

Its subcellular location is the periplasm. Its function is as follows. Part of the Tol-Pal system, which plays a role in outer membrane invagination during cell division and is important for maintaining outer membrane integrity. TolB occupies a key intermediary position in the Tol-Pal system because it communicates directly with both membrane-embedded components, Pal in the outer membrane and TolA in the inner membrane. The protein is Tol-Pal system protein TolB of Blochmanniella pennsylvanica (strain BPEN).